A 553-amino-acid polypeptide reads, in one-letter code: Phospholipase-B 81 (553 aa).

The signal sequence occupies residues 1 to 35 (MVRFGSAASSDNRRRRCWSWYWGGLLLLWAVAETR). Residues asparagine 69, asparagine 313, asparagine 416, and asparagine 531 are each glycosylated (N-linked (GlcNAc...) asparagine).

This sequence belongs to the phospholipase B-like family. In terms of tissue distribution, expressed by the venom gland.

It localises to the secreted. In terms of biological role, may cause hemolysis. The chain is Phospholipase-B 81 from Drysdalia coronoides (White-lipped snake).